The chain runs to 416 residues: Lipid III flippase (416 aa).

Over 1 to 17 (MSLAKASLWTAASTLVK) the chain is Cytoplasmic. A helical transmembrane segment spans residues 18–38 (IGAGLLVGKLLAVSFGPAGLG). The Periplasmic segment spans residues 39–45 (LAANFRQ). Residues 46–66 (LITVLGVLAGAGIFNGVTKYV) form a helical membrane-spanning segment. At 67–84 (AQYHDNPQQLRRVVGTSS) the chain is on the cytoplasmic side. The helical transmembrane segment at 85–105 (AMVLGFSTLMALVFVLAAAPI) threads the bilayer. The Periplasmic portion of the chain corresponds to 106–121 (SQGLFGNTDYQGLVRL). The helical transmembrane segment at 122–142 (VALVQMGIAWGNLLLALMKGF) threads the bilayer. Topologically, residues 143–144 (RD) are cytoplasmic. Residues 145–165 (AAGNALSLIVGSLIGVLAYYV) traverse the membrane as a helical segment. Topologically, residues 166–174 (SYRLGGYEG) are periplasmic. The helical transmembrane segment at 175–195 (ALLGLALIPALVVIPAAIMLI) threads the bilayer. Residues 196 to 216 (KRGVIPLSYLKPSWDNGLAGQ) are Cytoplasmic-facing. A helical membrane pass occupies residues 217–237 (LSKFTLMALITSVTLPVAYIM). Over 238–259 (MRKLLAAQYSWDEVGIWQGVSS) the chain is Periplasmic. The helical transmembrane segment at 260 to 280 (ISDAYLQFITASFSVYLLPTL) threads the bilayer. Topologically, residues 281-302 (SRLTEKRDITREVVKSLKFVLP) are cytoplasmic. A helical membrane pass occupies residues 303 to 323 (AVAAASFTVWLLRDFAIWLLL). Topologically, residues 324–334 (SNKFTAMRDLF) are periplasmic. A helical membrane pass occupies residues 335–355 (AWQLVGDVLKVGAYVFGYLVI). The Cytoplasmic portion of the chain corresponds to 356 to 370 (AKASLRFYILAEVSQ). 2 consecutive transmembrane segments (helical) span residues 371–391 (FTLL…LGAA) and 392–412 (QAYM…FLLW). Over 413 to 416 (RRRA) the chain is Cytoplasmic.

Belongs to the polysaccharide transport (PST) (TC 2.A.66.2) family. Probably part of a complex composed of WzxE, WzyE and WzzE.

The protein resides in the cell inner membrane. The protein operates within bacterial outer membrane biogenesis; enterobacterial common antigen biosynthesis. Functionally, mediates the transbilayer movement of Und-PP-GlcNAc-ManNAcA-Fuc4NAc (lipid III) from the inner to the outer leaflet of the cytoplasmic membrane during the assembly of enterobacterial common antigen (ECA). Required for the assembly of the phosphoglyceride-linked form of ECA (ECA(PG)) and the water-soluble cyclic form of ECA (ECA(CYC)). Could also mediate the translocation of Und-PP-GlcNAc. This is Lipid III flippase from Escherichia coli (strain K12).